Consider the following 50-residue polypeptide: Large ribosomal subunit protein eL39 (50 aa).

It belongs to the eukaryotic ribosomal protein eL39 family. In terms of assembly, part of the 50S ribosomal subunit. Interacts weakly with protein L23.

In terms of biological role, binds to the 23S rRNA. Forms part of the polypeptide exit tunnel. The sequence is that of Large ribosomal subunit protein eL39 (rpl39e) from Haloarcula marismortui (strain ATCC 43049 / DSM 3752 / JCM 8966 / VKM B-1809) (Halobacterium marismortui).